A 248-amino-acid chain; its full sequence is 5'-nucleotidase SurE (248 aa).

A divalent metal cation-binding residues include aspartate 8, aspartate 9, serine 39, and asparagine 91.

Belongs to the SurE nucleotidase family. It depends on a divalent metal cation as a cofactor.

It is found in the cytoplasm. It catalyses the reaction a ribonucleoside 5'-phosphate + H2O = a ribonucleoside + phosphate. Its function is as follows. Nucleotidase that shows phosphatase activity on nucleoside 5'-monophosphates. This is 5'-nucleotidase SurE from Shewanella amazonensis (strain ATCC BAA-1098 / SB2B).